Here is a 394-residue protein sequence, read N- to C-terminus: Elongation factor Tu (394 aa).

The region spanning 10–204 is the tr-type G domain; it reads KPHVNVGTIG…ALDTYIPEPE (195 aa). A G1 region spans residues 19–26; it reads GHVDHGKT. GTP is bound at residue 19-26; the sequence is GHVDHGKT. Threonine 26 provides a ligand contact to Mg(2+). Residues 60–64 form a G2 region; the sequence is GITIN. A G3 region spans residues 81–84; that stretch reads DCPG. Residues 81–85 and 136–139 contribute to the GTP site; these read DCPGH and NKCD. Residues 136-139 form a G4 region; that stretch reads NKCD. A G5 region spans residues 174 to 176; sequence SAL.

The protein belongs to the TRAFAC class translation factor GTPase superfamily. Classic translation factor GTPase family. EF-Tu/EF-1A subfamily. As to quaternary structure, monomer.

It is found in the cytoplasm. The enzyme catalyses GTP + H2O = GDP + phosphate + H(+). In terms of biological role, GTP hydrolase that promotes the GTP-dependent binding of aminoacyl-tRNA to the A-site of ribosomes during protein biosynthesis. This Colwellia psychrerythraea (strain 34H / ATCC BAA-681) (Vibrio psychroerythus) protein is Elongation factor Tu.